Here is a 561-residue protein sequence, read N- to C-terminus: Excitatory amino acid transporter 4 (561 aa).

Residues 1–52 lie on the Cytoplasmic side of the membrane; that stretch reads MSSHGNSLFLRESGAGGGCLQGLQDSLQQRALRTRLRLQTMTREHVRRFLRR. A Phosphoserine modification is found at serine 2. 3 helical membrane-spanning segments follow: residues 53–73, 96–116, and 130–150; these read NAFI…AFAL, MLQM…MASL, and VYYM…VTII. Asparagine 213, asparagine 229, and asparagine 236 each carry an N-linked (GlcNAc...) asparagine glycan. The next 3 helical transmembrane spans lie at 259–282, 292–319, and 341–362; these read SANG…IGGM, FFDS…LFLI, and LTVI…YFLV. Positions 368–398 form an intramembrane region, discontinuously helical; sequence FPFIGGILQALITAMGTSSSSATLPITFRCL. 385-387 is an L-aspartate binding site; it reads SSS. A helical membrane pass occupies residues 408 to 434; sequence ITRFVLPVGATVNMDGTALYEALAAIF. 3 residues coordinate Na(+): glycine 416, threonine 418, and asparagine 420. Residues threonine 424, 465–469, aspartate 498, and asparagine 505 contribute to the L-aspartate site; that span reads IPQAG. Residues 448–481 constitute an intramembrane region (discontinuously helical); the sequence is ITTISITATAASVGAAGIPQAGLVTMVIVLTSVG. A helical transmembrane segment spans residues 495 to 516; that stretch reads WFLDRLRTMTNVLGDSIGAAVI. Na(+) is bound by residues asparagine 505 and aspartate 509.

This sequence belongs to the dicarboxylate/amino acid:cation symporter (DAACS) (TC 2.A.23) family. SLC1A6 subfamily. Homotrimer.

It localises to the cell membrane. It carries out the reaction K(+)(in) + L-glutamate(out) + 3 Na(+)(out) + H(+)(out) = K(+)(out) + L-glutamate(in) + 3 Na(+)(in) + H(+)(in). The enzyme catalyses K(+)(in) + L-aspartate(out) + 3 Na(+)(out) + H(+)(out) = K(+)(out) + L-aspartate(in) + 3 Na(+)(in) + H(+)(in). The catalysed reaction is D-aspartate(out) + K(+)(in) + 3 Na(+)(out) + H(+)(out) = D-aspartate(in) + K(+)(out) + 3 Na(+)(in) + H(+)(in). Its function is as follows. Sodium-dependent, high-affinity amino acid transporter that mediates the uptake of L-glutamate and also L-aspartate and D-aspartate. Functions as a symporter that transports one amino acid molecule together with two or three Na(+) ions and one proton, in parallel with the counter-transport of one K(+) ion. Mediates Cl(-) flux that is not coupled to amino acid transport; this avoids the accumulation of negative charges due to aspartate and Na(+) symport. Plays a redundant role in the rapid removal of released glutamate from the synaptic cleft, which is essential for terminating the postsynaptic action of glutamate. This chain is Excitatory amino acid transporter 4 (Slc1a6), found in Rattus norvegicus (Rat).